Consider the following 142-residue polypeptide: Spliceosomal protein DIB1 (142 aa).

Belongs to the DIM1 family. In terms of assembly, component of the 25S [U4/U6.U5] tri-snRNP.

The protein localises to the nucleus. In terms of biological role, essential role in pre-mRNA splicing. Also essential for entry into mitosis (G2/M progression) as well as for chromosome segregation during mitosis. This is Spliceosomal protein DIB1 (DIB1) from Candida glabrata (strain ATCC 2001 / BCRC 20586 / JCM 3761 / NBRC 0622 / NRRL Y-65 / CBS 138) (Yeast).